Reading from the N-terminus, the 247-residue chain is 2,3-bisphosphoglycerate-dependent phosphoglycerate mutase (247 aa).

Substrate-binding positions include 9–16, 22–23, Arg61, 88–91, Lys99, 115–116, and 183–184; these read RHGESEWN, TG, ERHY, RR, and GN. The active-site Tele-phosphohistidine intermediate is the His10. Catalysis depends on Glu88, which acts as the Proton donor/acceptor.

The protein belongs to the phosphoglycerate mutase family. BPG-dependent PGAM subfamily.

It catalyses the reaction (2R)-2-phosphoglycerate = (2R)-3-phosphoglycerate. The protein operates within carbohydrate degradation; glycolysis; pyruvate from D-glyceraldehyde 3-phosphate: step 3/5. Catalyzes the interconversion of 2-phosphoglycerate and 3-phosphoglycerate. The chain is 2,3-bisphosphoglycerate-dependent phosphoglycerate mutase from Nocardioides sp. (strain ATCC BAA-499 / JS614).